Reading from the N-terminus, the 441-residue chain is Collagen alpha-1(XXVI) chain (441 aa).

The first 20 residues, 1–20 (MKLALLLPWACCCLCGSALA), serve as a signal peptide directing secretion. Residues 52 to 128 (RRHWCHHTVT…PGFTGSNCDE (77 aa)) enclose the EMI domain. Cystine bridges form between Cys-56–Cys-118, Cys-83–Cys-89, and Cys-117–Cys-126. Residue Asn-70 is glycosylated (N-linked (GlcNAc...) asparagine). A glycan (N-linked (GlcNAc...) asparagine) is linked at Asn-132. Disordered regions lie at residues 156 to 362 (AERP…AEGE) and 390 to 441 (PLAS…SSRK). 2 consecutive Collagen-like domains span residues 199-267 (GPAG…PGPS) and 302-355 (GVPG…EGEK). Pro residues-rich tracts occupy residues 200-215 (PAGP…PAGP), 231-243 (AGPP…PGPR), 252-269 (PGPP…PSPN), and 306-327 (PRGP…PPGT). Residues 348–357 (VKGEEGEKAA) show a composition bias toward basic and acidic residues.

In terms of assembly, homotrimer or heterotrimer. In terms of processing, hydroxylated on proline residues.

It localises to the secreted. The protein resides in the extracellular space. Its subcellular location is the extracellular matrix. The polypeptide is Collagen alpha-1(XXVI) chain (COL26A1) (Homo sapiens (Human)).